The primary structure comprises 86 residues: Protein IDA-LIKE 1 (86 aa).

Positions 1–27 (MNLSHKTMFMTLYIVFLLIFGSYNATA) are cleaved as a signal peptide.

Expressed in roots.

Its subcellular location is the secreted. It is found in the extracellular space. Its function is as follows. Involved in an ethylene-independent separation step of floral abscission. May act with RLK5 and HSL2 as ligand-receptor pairs. The polypeptide is Protein IDA-LIKE 1 (IDL1) (Arabidopsis thaliana (Mouse-ear cress)).